Here is a 712-residue protein sequence, read N- to C-terminus: Polyribonucleotide nucleotidyltransferase (712 aa).

2 residues coordinate Mg(2+): aspartate 487 and aspartate 493. The 60-residue stretch at 554-613 (PKIITMTINPDKIRDVIGPSGKQINKIIEETGVKIDIEQDGTVFISSINQEMNDKAKKII) folds into the KH domain. Positions 623–691 (GEIYEGKVKR…KQGRVNLSRK (69 aa)) constitute an S1 motif domain.

This sequence belongs to the polyribonucleotide nucleotidyltransferase family. Mg(2+) serves as cofactor.

It localises to the cytoplasm. The catalysed reaction is RNA(n+1) + phosphate = RNA(n) + a ribonucleoside 5'-diphosphate. Involved in mRNA degradation. Catalyzes the phosphorolysis of single-stranded polyribonucleotides processively in the 3'- to 5'-direction. This Bacillus cereus (strain G9842) protein is Polyribonucleotide nucleotidyltransferase.